Reading from the N-terminus, the 145-residue chain is Copper transporter 6 (145 aa).

The next 2 helical transmembrane spans lie at 47-67 (LGMYVLCLIVVFLLAVIVEWL) and 99-119 (YLVMLAVMSFNGGVFIVAIAG).

The protein belongs to the copper transporter (Ctr) (TC 1.A.56) family. SLC31A subfamily.

It localises to the membrane. Involved in the transport of copper. The chain is Copper transporter 6 (COPT6) from Arabidopsis thaliana (Mouse-ear cress).